The chain runs to 447 residues: KICSTOR complex protein ITFG2 (447 aa).

An FG-GAP 1; atypical repeat occupies F19–Y48. The residue at position 104 (S104) is a Phosphoserine. The stretch at N126–F155 is one FG-GAP 2; atypical repeat. A Phosphoserine modification is found at S220.

In terms of assembly, part of the KICSTOR complex composed of KPTN, ITFG2, KICS2 and SZT2. SZT2 probably serves as a link between the other three proteins in the KICSTOR complex and may mediate the direct interaction with the GATOR complex via GATOR1. The KICSTOR complex interacts directly with the GATOR1 complex and most probably indirectly with the GATOR2 complex in an amino acid-independent manner.

It localises to the lysosome membrane. Its function is as follows. As part of the KICSTOR complex functions in the amino acid-sensing branch of the TORC1 signaling pathway. Recruits, in an amino acid-independent manner, the GATOR1 complex to the lysosomal membranes and allows its interaction with GATOR2 and the RAG GTPases. Functions upstream of the RAG GTPases and is required to negatively regulate mTORC1 signaling in absence of amino acids. In absence of the KICSTOR complex mTORC1 is constitutively localized to the lysosome and activated. The KICSTOR complex is also probably involved in the regulation of mTORC1 by glucose. The sequence is that of KICSTOR complex protein ITFG2 from Homo sapiens (Human).